We begin with the raw amino-acid sequence, 907 residues long: Lipoxygenase 1, chloroplastic (907 aa).

The N-terminal 49 residues, 1 to 49 (MALAKQIMGASLMDQKTSVFGSNLCLNHVLVNKHRLRLRKTRKNGSMVV), are a transit peptide targeting the chloroplast. Residues 85–209 (DFFKDTIFRK…DLPNPRIFFT (125 aa)) enclose the PLAT domain. In terms of domain architecture, Lipoxygenase spans 212-907 (PYLPDETPVG…CRGVPNSISI (696 aa)). Fe cation-binding residues include H567, H572, H758, N762, and I907.

Belongs to the lipoxygenase family. The cofactor is Fe cation. In terms of tissue distribution, confined to glandular trichomes in flowers, and, at low levels, in leaves.

It localises to the plastid. The protein resides in the chloroplast. It carries out the reaction (9Z,12Z,15Z)-octadecatrienoate + O2 = 13-hydroperoxy-(9Z,11E,15Z)-octadecatrienoate. Its pathway is lipid metabolism; oxylipin biosynthesis. The protein operates within isoprenoid biosynthesis. Functionally, component of the monoterpenoid pyrethrins biosynthesis; pyrethrins are widely used plant-derived pesticide. Plant lipoxygenases may be involved in a number of diverse aspects of plant physiology including growth and development, pest resistance, and senescence or responses to wounding. Catalyzes the hydroperoxidation of lipids containing a cis,cis-1,4-pentadiene structure. Mediates the peroxidation of linolenic acid leading to the production of 13-hydroperoxylinolenic acid. The protein is Lipoxygenase 1, chloroplastic of Tanacetum cinerariifolium (Dalmatian daisy).